The chain runs to 720 residues: Catalase-peroxidase (720 aa).

A cross-link (tryptophyl-tyrosyl-methioninium (Trp-Tyr) (with M-248)) is located at residues 94-222 (WHAAGTYRIA…LAAVTMGLIY (129 aa)). Histidine 95 acts as the Proton acceptor in catalysis. A cross-link (tryptophyl-tyrosyl-methioninium (Tyr-Met) (with W-94)) is located at residues 222–248 (YVNPEGVDGNPDPLKTAHDVRVTFARM). A heme b-binding site is contributed by histidine 263.

This sequence belongs to the peroxidase family. Peroxidase/catalase subfamily. As to quaternary structure, homodimer. It depends on heme b as a cofactor. Post-translationally, formation of the three residue Trp-Tyr-Met cross-link is important for the catalase, but not the peroxidase activity of the enzyme.

It catalyses the reaction H2O2 + AH2 = A + 2 H2O. The enzyme catalyses 2 H2O2 = O2 + 2 H2O. Its function is as follows. Bifunctional enzyme with both catalase and broad-spectrum peroxidase activity. The sequence is that of Catalase-peroxidase from Synechococcus elongatus (strain ATCC 33912 / PCC 7942 / FACHB-805) (Anacystis nidulans R2).